A 160-amino-acid polypeptide reads, in one-letter code: MDLAIIDQTKAGVNQYHQDLVRCVLDYAGKYLELPDNTEMSVTFMNNEEIHQYNKKYRGIDKPTDVISFAIEEDGDDLPVLPDELMDAELAKNIGDILVSVDIINSQAEYLGHSYERELGFLVVHGFLHLNGYDHMLGDAEEKEMFDLQREILDNYGLKR.

His-125, His-129, and His-135 together coordinate Zn(2+).

Belongs to the endoribonuclease YbeY family. It depends on Zn(2+) as a cofactor.

It is found in the cytoplasm. Its function is as follows. Single strand-specific metallo-endoribonuclease involved in late-stage 70S ribosome quality control and in maturation of the 3' terminus of the 16S rRNA. The sequence is that of Endoribonuclease YbeY from Leuconostoc mesenteroides subsp. mesenteroides (strain ATCC 8293 / DSM 20343 / BCRC 11652 / CCM 1803 / JCM 6124 / NCDO 523 / NBRC 100496 / NCIMB 8023 / NCTC 12954 / NRRL B-1118 / 37Y).